The following is a 503-amino-acid chain: Maturase K (503 aa).

This sequence belongs to the intron maturase 2 family. MatK subfamily.

The protein resides in the plastid. The protein localises to the chloroplast. Usually encoded in the trnK tRNA gene intron. Probably assists in splicing its own and other chloroplast group II introns. The polypeptide is Maturase K (Kunzea baxteri (Scarlet kunzea)).